The primary structure comprises 243 residues: Type III pantothenate kinase (243 aa).

Residue aspartate 6–lysine 13 participates in ATP binding. Substrate contacts are provided by residues tyrosine 86 and glycine 93–arginine 96. Aspartate 95 acts as the Proton acceptor in catalysis. Position 116 (aspartate 116) interacts with K(+). Threonine 119 serves as a coordination point for ATP. Substrate is bound at residue threonine 171.

This sequence belongs to the type III pantothenate kinase family. As to quaternary structure, homodimer. The cofactor is NH4(+). Requires K(+) as cofactor.

It is found in the cytoplasm. The catalysed reaction is (R)-pantothenate + ATP = (R)-4'-phosphopantothenate + ADP + H(+). Its pathway is cofactor biosynthesis; coenzyme A biosynthesis; CoA from (R)-pantothenate: step 1/5. In terms of biological role, catalyzes the phosphorylation of pantothenate (Pan), the first step in CoA biosynthesis. The sequence is that of Type III pantothenate kinase from Bacteroides fragilis (strain YCH46).